The chain runs to 234 residues: 3,4-dihydroxy-2-butanone 4-phosphate synthase (234 aa).

D-ribulose 5-phosphate is bound by residues 39–40, D44, 152–156, and E176; these read RE and RRGHT. E40 is a Mg(2+) binding site. Position 155 (H155) interacts with Mg(2+).

It belongs to the DHBP synthase family. Homodimer. Requires Mg(2+) as cofactor. Mn(2+) serves as cofactor.

It carries out the reaction D-ribulose 5-phosphate = (2S)-2-hydroxy-3-oxobutyl phosphate + formate + H(+). It functions in the pathway cofactor biosynthesis; riboflavin biosynthesis; 2-hydroxy-3-oxobutyl phosphate from D-ribulose 5-phosphate: step 1/1. Its function is as follows. Catalyzes the conversion of D-ribulose 5-phosphate to formate and 3,4-dihydroxy-2-butanone 4-phosphate. The protein is 3,4-dihydroxy-2-butanone 4-phosphate synthase of Pelobacter propionicus (strain DSM 2379 / NBRC 103807 / OttBd1).